A 728-amino-acid chain; its full sequence is Beta-galactosidase 12 (728 aa).

An N-terminal signal peptide occupies residues 1-27 (MGLNFREKAWILLGILCCSSLICSVKA). Glu185 (proton donor) is an active-site residue. The active-site Nucleophile is the Glu254. 3 N-linked (GlcNAc...) asparagine glycosylation sites follow: Asn255, Asn380, and Asn450.

It belongs to the glycosyl hydrolase 35 family. As to expression, ubiquitous, with higher expression levels in roots and siliques.

It localises to the secreted. Its subcellular location is the extracellular space. The protein localises to the apoplast. The enzyme catalyses Hydrolysis of terminal non-reducing beta-D-galactose residues in beta-D-galactosides.. The chain is Beta-galactosidase 12 (BGAL12) from Arabidopsis thaliana (Mouse-ear cress).